A 463-amino-acid polypeptide reads, in one-letter code: Dipeptidyl peptidase 1 (463 aa).

Residues methionine 1–cysteine 24 form the signal peptide. N-linked (GlcNAc...) asparagine glycosylation is found at asparagine 29, asparagine 53, and asparagine 119. 5 disulfides stabilise this stretch: cysteine 30-cysteine 118, cysteine 54-cysteine 136, cysteine 255-cysteine 298, cysteine 291-cysteine 331, and cysteine 321-cysteine 337. A propeptide spanning residues alanine 135–histidine 230 is cleaved from the precursor. Cysteine 258 is an active-site residue. Asparagine 276 carries an N-linked (GlcNAc...) asparagine glycan. Chloride is bound by residues phenylalanine 302 and tyrosine 304. Position 347 (tyrosine 347) interacts with chloride. Residues histidine 405 and asparagine 427 contribute to the active site.

It belongs to the peptidase C1 family. Tetramer of heterotrimers consisting of exclusion domain, heavy- and light chains. Chloride is required as a cofactor.

It localises to the lysosome. The enzyme catalyses Release of an N-terminal dipeptide, Xaa-Yaa-|-Zaa-, except when Xaa is Arg or Lys, or Yaa or Zaa is Pro.. Functionally, thiol protease. Has dipeptidylpeptidase activity. Active against a broad range of dipeptide substrates composed of both polar and hydrophobic amino acids. Proline cannot occupy the P1 position and arginine cannot occupy the P2 position of the substrate. Can act as both an exopeptidase and endopeptidase. Activates serine proteases such as elastase, cathepsin G and granzymes A and B. The polypeptide is Dipeptidyl peptidase 1 (CTSC) (Macaca fascicularis (Crab-eating macaque)).